The sequence spans 185 residues: Ribose 1,5-bisphosphate phosphokinase PhnN (185 aa).

13-20 (GPSGAGKD) lines the ATP pocket.

This sequence belongs to the ribose 1,5-bisphosphokinase family.

It catalyses the reaction alpha-D-ribose 1,5-bisphosphate + ATP = 5-phospho-alpha-D-ribose 1-diphosphate + ADP. The protein operates within metabolic intermediate biosynthesis; 5-phospho-alpha-D-ribose 1-diphosphate biosynthesis; 5-phospho-alpha-D-ribose 1-diphosphate from D-ribose 5-phosphate (route II): step 3/3. In terms of biological role, catalyzes the phosphorylation of ribose 1,5-bisphosphate to 5-phospho-D-ribosyl alpha-1-diphosphate (PRPP). This is Ribose 1,5-bisphosphate phosphokinase PhnN from Chromobacterium violaceum (strain ATCC 12472 / DSM 30191 / JCM 1249 / CCUG 213 / NBRC 12614 / NCIMB 9131 / NCTC 9757 / MK).